We begin with the raw amino-acid sequence, 331 residues long: CRISPR-associated endonuclease Cas1 1 (331 aa).

E161, H226, and E241 together coordinate Mn(2+).

This sequence belongs to the CRISPR-associated endonuclease Cas1 family. Homodimer, forms a heterotetramer with a Cas2 homodimer. It depends on Mg(2+) as a cofactor. The cofactor is Mn(2+).

CRISPR (clustered regularly interspaced short palindromic repeat), is an adaptive immune system that provides protection against mobile genetic elements (viruses, transposable elements and conjugative plasmids). CRISPR clusters contain spacers, sequences complementary to antecedent mobile elements, and target invading nucleic acids. CRISPR clusters are transcribed and processed into CRISPR RNA (crRNA). Acts as a dsDNA endonuclease. Involved in the integration of spacer DNA into the CRISPR cassette. The protein is CRISPR-associated endonuclease Cas1 1 of Methanospirillum hungatei JF-1 (strain ATCC 27890 / DSM 864 / NBRC 100397 / JF-1).